The sequence spans 241 residues: Methylthioribulose-1-phosphate dehydratase (241 aa).

Cys96 is a binding site for substrate. Residues His114 and His116 each coordinate Zn(2+). Glu138 functions as the Proton donor/acceptor in the catalytic mechanism. Position 194 (His194) interacts with Zn(2+).

This sequence belongs to the aldolase class II family. MtnB subfamily. Zn(2+) is required as a cofactor.

The protein resides in the cytoplasm. It carries out the reaction 5-(methylsulfanyl)-D-ribulose 1-phosphate = 5-methylsulfanyl-2,3-dioxopentyl phosphate + H2O. Its pathway is amino-acid biosynthesis; L-methionine biosynthesis via salvage pathway; L-methionine from S-methyl-5-thio-alpha-D-ribose 1-phosphate: step 2/6. Its function is as follows. Catalyzes the dehydration of methylthioribulose-1-phosphate (MTRu-1-P) into 2,3-diketo-5-methylthiopentyl-1-phosphate (DK-MTP-1-P). Functions in the methionine salvage pathway. May play a role in apoptosis. The protein is Methylthioribulose-1-phosphate dehydratase of Danio rerio (Zebrafish).